Reading from the N-terminus, the 382-residue chain is LIM homeobox transcription factor 1-alpha (382 aa).

LIM zinc-binding domains follow at residues 33-92 (SVCE…LFAV) and 92-154 (VKCG…EREL). 2 disordered regions span residues 161 to 208 (AASD…QQRR) and 252 to 285 (KLARRQQQQQQDQQNTQRLSSAQTNGGGSAGMEG). The homeobox DNA-binding region spans 195–254 (PKRPRTILTTQQRRAFKASFEVSSKPCRKVRETLAAETGLSVRVVQVWFQNQRAKMKKLA). The segment covering 256 to 269 (RQQQQQQDQQNTQR) has biased composition (low complexity).

Isoform 1 is expressed in many tissues. Not found in heart, liver, spleen and testis. Relatively highly expressed in fetal brain. Isoform LMX1A-4AB is expressed in testis.

The protein localises to the nucleus. Functionally, acts as a transcriptional activator by binding to an A/T-rich sequence, the FLAT element, in the insulin gene promoter. Required for development of the roof plate and, in turn, for specification of dorsal cell fates in the CNS and developing vertebrae. This chain is LIM homeobox transcription factor 1-alpha (LMX1A), found in Homo sapiens (Human).